Reading from the N-terminus, the 147-residue chain is D(1B) dopamine receptor (147 aa).

A helical membrane pass occupies residues 1 to 12; the sequence is SILISFPVQLNW. Residues 13-55 are Extracellular-facing; that stretch reads HRDQAGSWGGLDLTNNLANWTPWEEDVWEPDVRAENCDSSLNR. N54 is a glycosylation site (N-linked (GlcNAc...) asparagine). The helical transmembrane segment at 56-78 threads the bilayer; the sequence is TYAISSSLVSFYIPVAIMIVTYT. Residues 79–128 lie on the Cytoplasmic side of the membrane; that stretch reads RIYRIAQVQIRRISSLERAAEHAQSCRSSAACAPDTSLRASIKKETKVLK. A helical membrane pass occupies residues 129 to 147; the sequence is TLSVIMGVFVCCWLPFFIL.

It belongs to the G-protein coupled receptor 1 family.

It localises to the cell membrane. Dopamine receptor whose activity is mediated by G proteins which activate adenylyl cyclase. The protein is D(1B) dopamine receptor (DRD5) of Macaca mulatta (Rhesus macaque).